The sequence spans 341 residues: Phosphate acyltransferase (341 aa).

The protein belongs to the PlsX family. In terms of assembly, homodimer. Probably interacts with PlsY.

The protein localises to the cytoplasm. The enzyme catalyses a fatty acyl-[ACP] + phosphate = an acyl phosphate + holo-[ACP]. Its pathway is lipid metabolism; phospholipid metabolism. In terms of biological role, catalyzes the reversible formation of acyl-phosphate (acyl-PO(4)) from acyl-[acyl-carrier-protein] (acyl-ACP). This enzyme utilizes acyl-ACP as fatty acyl donor, but not acyl-CoA. In Chlorobaculum parvum (strain DSM 263 / NCIMB 8327) (Chlorobium vibrioforme subsp. thiosulfatophilum), this protein is Phosphate acyltransferase.